The chain runs to 444 residues: Sonic hedgehog protein (444 aa).

Residues 1–24 (MLVATQSLLLLSFICTLVTPPGLA) form the signal peptide. C25 carries N-palmitoyl cysteine lipidation. The short motif at 33 to 39 (KRRHPKK) is the Cardin-Weintraub element. Positions 90, 91, 96, 126, 127, 130, and 132 each coordinate Ca(2+). 3 residues coordinate Zn(2+): H141, D148, and H183. G198 is lipidated: Cholesterol glycine ester. 3 consecutive repeat copies span residues 386-393 (QVDLQSHH), 394-401 (QVDLQSHH), and 403-409 (VDLQSHH). The segment at 386–409 (QVDLQSHHQVDLQSHHQVDLQSHH) is 3 X 8 AA tandem repeats of Q-V-D-L-Q-S-H-H.

Belongs to the hedgehog family. In terms of assembly, interacts with HHATL/GUP1 which negatively regulates HHAT-mediated palmitoylation of the SHH N-terminus. Interacts with BOC and CDON. Interacts with HHIP. Interacts with DISP1 via its cholesterol anchor. Interacts with SCUBE2. Multimer. Post-translationally, the C-terminal domain displays an autoproteolysis activity and a cholesterol transferase activity. Both activities result in the cleavage of the full-length protein and covalent attachment of a cholesterol moiety to the C-terminal of the newly generated N-terminal fragment (ShhN). Cholesterylation is required for the sonic hedgehog protein N-product targeting to lipid rafts and multimerization. ShhN is the active species in both local and long-range signaling, whereas the C-product (ShhC) is degraded in the reticulum endoplasmic. N-palmitoylation by HHAT of ShhN is required for sonic hedgehog protein N-product multimerization and full activity. It is a prerequisite for the membrane-proximal positioning and the subsequent shedding of this N-terminal peptide. In terms of processing, the lipidated N- and C-terminal peptides of ShhNp can be cleaved (shedding). The N-terminal palmitoylated peptide is cleaved at the Cardin-Weintraub (CW) motif site. The cleavage reduced the interactions with heparan sulfate. The cleavage is enhanced by SCUBE2. As to expression, strongly expressed in notochord and neural floor plate during embryogenesis. In tadpole, high expression is observed in pancreas/stomach, moderate expression in tail, and low expression in intestine, brain, and hind limb.

It is found in the endoplasmic reticulum membrane. Its subcellular location is the golgi apparatus membrane. The protein localises to the cell membrane. The enzyme catalyses glycyl-L-cysteinyl-[protein] + cholesterol + H(+) = [protein]-C-terminal glycyl cholesterol ester + N-terminal L-cysteinyl-[protein]. Functionally, the C-terminal part of the sonic hedgehog protein precursor displays an autoproteolysis and a cholesterol transferase activity. Both activities result in the cleavage of the full-length protein into two parts (ShhN and ShhC) followed by the covalent attachment of a cholesterol moiety to the C-terminal of the newly generated ShhN. Both activities occur in the endoplasmic reticulum. Once cleaved, ShhC is degraded in the endoplasmic reticulum. Its function is as follows. The dually lipidated sonic hedgehog protein N-product (ShhNp) is a morphogen which is essential for a variety of patterning events during development. Induces ventral cell fate in the neural tube and somites. Involved in the patterning of the anterior-posterior axis of the developing limb bud. Essential for axon guidance. Binds to the patched (PTCH1) receptor, which functions in association with smoothened (SMO), to activate the transcription of target genes. In the absence of SHH, PTCH1 represses the constitutive signaling activity of SMO. The chain is Sonic hedgehog protein from Xenopus laevis (African clawed frog).